The following is an 818-amino-acid chain: Myosin-A (818 aa).

At serine 19 the chain carries Phosphoserine; by PKG. Residues methionine 97–arginine 771 form the Myosin motor domain. Glycine 191 to threonine 198 serves as a coordination point for ATP. The actin-binding stretch occupies residues proline 661 to glutamate 671. Positions lysine 773–glutamine 818 are tail.

It belongs to the TRAFAC class myosin-kinesin ATPase superfamily. Myosin family. Component of the glideosome complex composed of GAP50, GAP45, MTIP and MyoA; the complex is formed during the late schizont stage and in merozoites. MyoA, MTIP and GAP45 probably form an initial complex in the cytoplasm which is then recruited to the outer face of the inner membrane complex via the interaction with GAP50. Interacts with ACT1.

Its subcellular location is the cell membrane. In terms of biological role, myosins are actin-based motor molecules with ATPase activity. Unconventional myosins serve in intracellular movements. Their highly divergent tails are presumed to bind to membranous compartments, which would be moved relative to actin filaments. The polypeptide is Myosin-A (Plasmodium falciparum (isolate 3D7)).